Consider the following 349-residue polypeptide: Terpene cyclase janA (349 aa).

A glycan (N-linked (GlcNAc...) asparagine) is linked at Asn-80. 6 helical membrane passes run 81–101 (LSLYGVAFASALVPMWLVIVL), 116–136 (LAFLAGPLVQCLGPGLVIPAI), 155–175 (IGFYPSSMIIGYILPLILAAL), 189–209 (LIAVWQGWPVYTSLIMLIIHY), 223–243 (IACAFAFACSTAGHLAFLWFA), and 308–328 (VILIFGMAGVVFLGPCSVALL).

Belongs to the membrane-bound ascI terpene cyclase family.

The protein localises to the membrane. The protein operates within secondary metabolite biosynthesis. Part of the gene cluster that mediates the biosynthesis of the indole diterpenes janthitremanes such as shearinine K or shearinine A. The geranylgeranyl diphosphate (GGPP) synthase janG catalyzes the first step in janthitremane biosynthesis via conversion of farnesyl pyrophosphate and isopentyl pyrophosphate into geranylgeranyl pyrophosphate (GGPP). Condensation of indole-3-glycerol phosphate with GGPP by the prenyl transferase janC then forms 3-geranylgeranylindole (3-GGI). Epoxidation by the FAD-dependent monooxygenase janM leads to a epoxidized-GGI that is substrate of the terpene cyclase janB for cyclization to yield paspaline. Paspaline is subsequently converted to 13-desoxypaspaline by the cytochrome P450 monooxygenase janP, via beta-PC-M6 in a series of alpha-face oxidations. The cytochrome P450 monooxygenase janQ is proposed to carry out sequential beta-face oxidation steps at C-7 and C-13 of 13-desoxypaspaline to form paspalicine and paspalinine respectively. The indole diterpene prenyltransferase janD may then convert paspalinine into shearinine K which is substrate of janO and/or additional enzymes for oxidation and cyclization to generate shearinine A. The sequence is that of Terpene cyclase janA from Penicillium janthinellum (Penicillium vitale).